The primary structure comprises 586 residues: Actin-related protein 9 (586 aa).

A disordered region spans residues 141–169 (STPIVDKDADVDPLQRSTPDDTEPNSEEN).

It belongs to the actin family. ARP8 subfamily.

The sequence is that of Actin-related protein 9 (ARP9) from Oryza sativa subsp. japonica (Rice).